The chain runs to 270 residues: Sulfur carrier protein FdhD (270 aa).

Residue Cys-108 is the Cysteine persulfide intermediate of the active site. 247–252 (FIRDGR) provides a ligand contact to Mo-bis(molybdopterin guanine dinucleotide).

The protein belongs to the FdhD family.

The protein localises to the cytoplasm. Required for formate dehydrogenase (FDH) activity. Acts as a sulfur carrier protein that transfers sulfur from IscS to the molybdenum cofactor prior to its insertion into FDH. The chain is Sulfur carrier protein FdhD from Halalkalibacterium halodurans (strain ATCC BAA-125 / DSM 18197 / FERM 7344 / JCM 9153 / C-125) (Bacillus halodurans).